The primary structure comprises 430 residues: MPYIVDVYAREVLDSRGNPTVEVEVYTESGAFGRALVPSGASTGEYEAVELRDGDKDRYLGKGVLTAVNNVNEIIAPELIGFDVTEQVSIDKLLIELDGTENKGKLGANAILGVSMAVARAAADFLQIPLYQYLGGFNSKTLPVPMMNIVNGGEHADNNVDIQEFMIMPVGAENFREALRMGAQIFHSLKSVLKEKGLNTAVGDEGGFAPNLGSNEEALQTIVEAIEKAGFKPGEEVKLAMDAASSEFYNKEDGKYHLAGEGVVKTSAEMVDWYEELTSKYPIISIEDGLDENDWEGHKLLTERLGSKVQLVGDDLFVTNTKKLAEGIKNGVGNSILIKVNQIGTLTETFDAIEMAKRAGYTAVISHRSGETEDSTIADIAVATNAGQIKTGAPSRTDRVAKYNQLLRIEDQLAETAQYHGIQSFYNLNK.

Glutamine 163 provides a ligand contact to (2R)-2-phosphoglycerate. The active-site Proton donor is glutamate 205. Mg(2+) is bound by residues aspartate 242, glutamate 287, and aspartate 314. (2R)-2-phosphoglycerate is bound by residues lysine 339, arginine 368, serine 369, and lysine 390. The active-site Proton acceptor is the lysine 339.

This sequence belongs to the enolase family. Mg(2+) serves as cofactor.

Its subcellular location is the cytoplasm. The protein localises to the secreted. The protein resides in the cell surface. It carries out the reaction (2R)-2-phosphoglycerate = phosphoenolpyruvate + H2O. The protein operates within carbohydrate degradation; glycolysis; pyruvate from D-glyceraldehyde 3-phosphate: step 4/5. Its function is as follows. Catalyzes the reversible conversion of 2-phosphoglycerate (2-PG) into phosphoenolpyruvate (PEP). It is essential for the degradation of carbohydrates via glycolysis. The polypeptide is Enolase (Bacillus licheniformis (strain ATCC 14580 / DSM 13 / JCM 2505 / CCUG 7422 / NBRC 12200 / NCIMB 9375 / NCTC 10341 / NRRL NRS-1264 / Gibson 46)).